We begin with the raw amino-acid sequence, 751 residues long: Translation initiation factor IF-2, chloroplastic (751 aa).

Residues 86–156 (KKEKSKFRKD…KSKKQTSAKN (71 aa)) are disordered. Positions 93 to 106 (RKDEDYDSLKREDN) are enriched in basic and acidic residues. A compositionally biased stretch (low complexity) spans 129–143 (VSNTNTLNKKNVVKS). Residues 250-423 (KRPPVIAIMG…ILVSEIEDLK (174 aa)) enclose the tr-type G domain. Residues 259 to 266 (GHVDHGKT) are G1. GTP is bound at residue 259-266 (GHVDHGKT). Residues 284 to 288 (GITQK) are G2. Residues 309–312 (DTPG) are G3. Residues 309 to 313 (DTPGH) and 363 to 366 (NKID) each bind GTP. The segment at 363–366 (NKID) is G4. The segment at 399–401 (SAM) is G5.

Belongs to the TRAFAC class translation factor GTPase superfamily. Classic translation factor GTPase family. IF-2 subfamily.

It is found in the plastid. The protein localises to the chloroplast. In terms of biological role, one of the essential components for the initiation of protein synthesis. Protects formylmethionyl-tRNA from spontaneous hydrolysis and promotes its binding to the 30S ribosomal subunits. Also involved in the hydrolysis of GTP during the formation of the 70S ribosomal complex. This is Translation initiation factor IF-2, chloroplastic (infB) from Rhodomonas salina (Cryptomonas salina).